The primary structure comprises 56 residues: Large ribosomal subunit protein bL32 (56 aa).

A disordered region spans residues 1-29 (MAVQQNKPSRSKRGMRRSHDALTTSSVSV).

It belongs to the bacterial ribosomal protein bL32 family.

In Pectobacterium atrosepticum (strain SCRI 1043 / ATCC BAA-672) (Erwinia carotovora subsp. atroseptica), this protein is Large ribosomal subunit protein bL32.